The primary structure comprises 288 residues: B3 domain-containing protein At2g35310 (288 aa).

2 consecutive DNA-binding regions (TF-B3) follow at residues 19–114 (FFKV…FMQD) and 196–288 (AEFS…VSKP).

Its subcellular location is the nucleus. In Arabidopsis thaliana (Mouse-ear cress), this protein is B3 domain-containing protein At2g35310.